A 193-amino-acid chain; its full sequence is Ion-translocating oxidoreductase complex subunit A (193 aa).

6 consecutive transmembrane segments (helical) span residues 5–25, 47–67, 72–92, 102–122, 134–154, and 171–191; these read LLLFVGTVLVNNFVLVKFLGL, FVMTLATIFSWIIDHLILVPL, LRTMAFILVIAVVVQFTEMVV, LLGIYLPLITTNCAVLGVALL, ALYGFSAAVGFSLVMVLFAAI, and AIALVTAGLMSLAFMGFSGLV.

The protein belongs to the NqrDE/RnfAE family. The complex is composed of six subunits: RnfA, RnfB, RnfC, RnfD, RnfE and RnfG.

It is found in the cell inner membrane. Functionally, part of a membrane-bound complex that couples electron transfer with translocation of ions across the membrane. The chain is Ion-translocating oxidoreductase complex subunit A from Cronobacter sakazakii (strain ATCC BAA-894) (Enterobacter sakazakii).